A 466-amino-acid polypeptide reads, in one-letter code: ATP synthase subunit beta (466 aa).

153-160 (GGAGVGKT) lines the ATP pocket.

It belongs to the ATPase alpha/beta chains family. F-type ATPases have 2 components, CF(1) - the catalytic core - and CF(0) - the membrane proton channel. CF(1) has five subunits: alpha(3), beta(3), gamma(1), delta(1), epsilon(1). CF(0) has three main subunits: a(1), b(2) and c(9-12). The alpha and beta chains form an alternating ring which encloses part of the gamma chain. CF(1) is attached to CF(0) by a central stalk formed by the gamma and epsilon chains, while a peripheral stalk is formed by the delta and b chains.

It localises to the cell membrane. It carries out the reaction ATP + H2O + 4 H(+)(in) = ADP + phosphate + 5 H(+)(out). Functionally, produces ATP from ADP in the presence of a proton gradient across the membrane. The catalytic sites are hosted primarily by the beta subunits. The protein is ATP synthase subunit beta of Leuconostoc mesenteroides subsp. mesenteroides (strain ATCC 8293 / DSM 20343 / BCRC 11652 / CCM 1803 / JCM 6124 / NCDO 523 / NBRC 100496 / NCIMB 8023 / NCTC 12954 / NRRL B-1118 / 37Y).